Reading from the N-terminus, the 313-residue chain is tRNA dimethylallyltransferase (313 aa).

10-17 is a binding site for ATP; sequence GPTASGKT. 12–17 contributes to the substrate binding site; it reads TASGKT. 3 interaction with substrate tRNA regions span residues 35 to 38, 159 to 163, and 240 to 245; these read DSAM, QRIQR, and RCVGYR.

The protein belongs to the IPP transferase family. As to quaternary structure, monomer. The cofactor is Mg(2+).

It catalyses the reaction adenosine(37) in tRNA + dimethylallyl diphosphate = N(6)-dimethylallyladenosine(37) in tRNA + diphosphate. Its function is as follows. Catalyzes the transfer of a dimethylallyl group onto the adenine at position 37 in tRNAs that read codons beginning with uridine, leading to the formation of N6-(dimethylallyl)adenosine (i(6)A). This Legionella pneumophila (strain Corby) protein is tRNA dimethylallyltransferase.